The following is a 137-amino-acid chain: Basic phospholipase A2 homolog MT1 (137 aa).

An N-terminal signal peptide occupies residues 1–16 (MRTLWIVALLLVGVEG). Disulfide bonds link Cys-42–Cys-131, Cys-44–Cys-60, Cys-59–Cys-111, Cys-65–Cys-137, Cys-66–Cys-104, Cys-73–Cys-97, and Cys-91–Cys-102. The important for membrane-damaging activities in eukaryotes and bacteria; heparin-binding stretch occupies residues 121–133 (KKYKAYFKFKCKK).

It belongs to the phospholipase A2 family. Group II subfamily. K49 sub-subfamily. In terms of assembly, binds to heparin. In terms of tissue distribution, expressed by the venom gland.

The protein localises to the secreted. With respect to regulation, heparin and wedelolactone inhibit the myotoxic activity. The PLA2 inhibitor, para-bromophenacyl bromide (BPB), inhibits the myotoxic activity. Its function is as follows. Snake venom phospholipase A2 homolog that lacks enzymatic activity. Has myotoxic activities. A model of myotoxic mechanism has been proposed: an apo Lys49-PLA2 is activated by the entrance of a hydrophobic molecule (e.g. fatty acid) at the hydrophobic channel of the protein leading to a reorientation of a monomer. This reorientation causes a transition between 'inactive' to 'active' states, causing alignment of C-terminal and membrane-docking sites (MDoS) side-by-side and putting the membrane-disruption sites (MDiS) in the same plane, exposed to solvent and in a symmetric position for both monomers. The MDoS region stabilizes the toxin on membrane by the interaction of charged residues with phospholipid head groups. Subsequently, the MDiS region destabilizes the membrane with penetration of hydrophobic residues. This insertion causes a disorganization of the membrane, allowing an uncontrolled influx of ions (i.e. calcium and sodium), and eventually triggering irreversible intracellular alterations and cell death. The polypeptide is Basic phospholipase A2 homolog MT1 (Agkistrodon contortrix laticinctus (Broad-banded copperhead)).